The following is a 429-amino-acid chain: Inner membrane transport protein RhmT (429 aa).

The Cytoplasmic segment spans residues 1–16; that stretch reads MSTALLDAVVKKNRVR. Residues 17-37 form a helical membrane-spanning segment; that stretch reads LIPFMLALYVLAFLDRSNIGF. Residues 38–54 are Periplasmic-facing; that stretch reads AKQTYQIDTGLSNEAYA. The chain crosses the membrane as a helical span at residues 55-75; that stretch reads LGAGIFFVVYAFLGVPANLLM. At 76–81 the chain is on the cytoplasmic side; that stretch reads RKLGAR. Residues 82–102 form a helical membrane-spanning segment; sequence TWIGTTTLLWGFLSAAMAWAD. The Periplasmic segment spans residues 103–143; sequence TEAKFLIVRTLLRAAEAGFFPGMIYLTSQWFPQRNRASIMG. A helical membrane pass occupies residues 144–164; the sequence is LFYMGAPLALTLGSPLSGALL. Residues 165–174 lie on the Cytoplasmic side of the membrane; it reads EMHGFMGHPG. Residues 175–195 form a helical membrane-spanning segment; the sequence is WFWMFVIEGLLAVGAGVFTFF. Topologically, residues 196–242 are periplasmic; the sequence is WLDDTPEQARFLSKQEKTLLINQLASEEQQKVTSRLSDALRNGRVWQ. A helical transmembrane segment spans residues 243-263; sequence LAIIYLTIQVAVYGLIFFLPT. The Cytoplasmic segment spans residues 264 to 274; it reads QVAALLGTKVG. A helical membrane pass occupies residues 275-295; the sequence is FTASVVTAIPWVAALFGTWLI. Topologically, residues 296-324 are periplasmic; the sequence is PRYSDKTGERRNVAALTLLAAGIGIGLSG. The chain crosses the membrane as a helical span at residues 325-345; it reads LLSPVMAIVALCVAAIGFIAV. Over 346–361 the chain is Cytoplasmic; the sequence is QPVFWTMPTQLLSGTA. A helical membrane pass occupies residues 362-382; it reads LAAGIGFVNLFGAVGGFIAPI. Topologically, residues 383-394 are periplasmic; that stretch reads LRVKAETLFASD. Residues 395-415 traverse the membrane as a helical segment; sequence AAGLLTLAAVAVIGSLIIFTL. The Cytoplasmic portion of the chain corresponds to 416–429; sequence RVNRTVAQTDVAHH.

It belongs to the major facilitator superfamily. Phthalate permease family.

It localises to the cell inner membrane. This chain is Inner membrane transport protein RhmT (rhmT), found in Escherichia coli (strain K12).